We begin with the raw amino-acid sequence, 284 residues long: CUE domain-containing protein 2 (284 aa).

The region spanning 141-184 (EELPGVDVLLEVFPTCSMEQAQWVLAKARGDLEEAVHMLVEGKE) is the CUE domain. Residues 183-204 (KEEGPPGWDGPSQDLPRRLRGP) are disordered.

The protein belongs to the CUEDC2 family. As to quaternary structure, interacts with PGR and ESR1.

It localises to the cytoplasm. It is found in the nucleus. In terms of biological role, controls PGR and ESR1 protein levels through their targeting for ubiquitination and subsequent proteasomal degradation. The chain is CUE domain-containing protein 2 (Cuedc2) from Mus musculus (Mouse).